The chain runs to 178 residues: Cell division protein SepF (178 aa).

Positions 19-45 (EHYESEHHTPHKDEDDSMEHDREERRA) are enriched in basic and acidic residues. The tract at residues 19-65 (EHYESEHHTPHKDEDDSMEHDREERRAPAPVREIARETPTPHAAEEE) is disordered.

Belongs to the SepF family. Homodimer. Interacts with FtsZ.

It is found in the cytoplasm. Cell division protein that is part of the divisome complex and is recruited early to the Z-ring. Probably stimulates Z-ring formation, perhaps through the cross-linking of FtsZ protofilaments. Its function overlaps with FtsA. This chain is Cell division protein SepF, found in Arthrobacter sp. (strain FB24).